A 268-amino-acid polypeptide reads, in one-letter code: Phosphatidylglycerol--prolipoprotein diacylglyceryl transferase (268 aa).

The next 7 membrane-spanning stretches (helical) occupy residues 14-34 (IIFS…LIGF), 60-80 (LLFN…VLFY), 95-115 (VWEG…AMLV), 124-144 (FWVV…MGRI), 176-196 (SQLY…NWFI), 203-223 (GSVA…VEFF), and 238-258 (ISMG…FIVL). Position 143 (arginine 143) interacts with a 1,2-diacyl-sn-glycero-3-phospho-(1'-sn-glycerol).

The protein belongs to the Lgt family.

The protein localises to the cell inner membrane. The catalysed reaction is L-cysteinyl-[prolipoprotein] + a 1,2-diacyl-sn-glycero-3-phospho-(1'-sn-glycerol) = an S-1,2-diacyl-sn-glyceryl-L-cysteinyl-[prolipoprotein] + sn-glycerol 1-phosphate + H(+). The protein operates within protein modification; lipoprotein biosynthesis (diacylglyceryl transfer). Its function is as follows. Catalyzes the transfer of the diacylglyceryl group from phosphatidylglycerol to the sulfhydryl group of the N-terminal cysteine of a prolipoprotein, the first step in the formation of mature lipoproteins. This chain is Phosphatidylglycerol--prolipoprotein diacylglyceryl transferase, found in Mannheimia succiniciproducens (strain KCTC 0769BP / MBEL55E).